The primary structure comprises 76 residues: Proteolipid protein 2 (76 aa).

The MARVEL domain occupies 1 to 60 (ISGPWSDFFRALGAVILYLMTSIVVLVERGNNSKGAAGVLGLCAAGLFGYDAYITFPSGT). The helical transmembrane segment at 8 to 28 (FFRALGAVILYLMTSIVVLVE) threads the bilayer. Asn-31 carries N-linked (GlcNAc...) asparagine glycosylation. A helical transmembrane segment spans residues 36–56 (AAGVLGLCAAGLFGYDAYITF).

It is found in the membrane. May play a role in cell differentiation in the intestinal epithelium. The sequence is that of Proteolipid protein 2 (PLP2) from Ovis aries (Sheep).